The sequence spans 106 residues: Large ribosomal subunit protein uL24 (106 aa).

A compositionally biased stretch (basic and acidic residues) spans E84–R97. The disordered stretch occupies residues E84–K106.

The protein belongs to the universal ribosomal protein uL24 family. As to quaternary structure, part of the 50S ribosomal subunit.

Functionally, one of two assembly initiator proteins, it binds directly to the 5'-end of the 23S rRNA, where it nucleates assembly of the 50S subunit. One of the proteins that surrounds the polypeptide exit tunnel on the outside of the subunit. This chain is Large ribosomal subunit protein uL24, found in Anaeromyxobacter dehalogenans (strain 2CP-1 / ATCC BAA-258).